The chain runs to 312 residues: Ornithine carbamoyltransferase, catabolic (312 aa).

Carbamoyl phosphate-binding positions include Ser-57 to Thr-60, Gln-84, Arg-108, and His-135 to Gln-138. L-ornithine-binding positions include Asn-167, Asp-231, and Ser-235 to Met-236. Cys-272–Leu-273 provides a ligand contact to carbamoyl phosphate.

This sequence belongs to the aspartate/ornithine carbamoyltransferase superfamily. OTCase family.

The protein resides in the cytoplasm. The enzyme catalyses carbamoyl phosphate + L-ornithine = L-citrulline + phosphate + H(+). It functions in the pathway amino-acid degradation; L-arginine degradation via ADI pathway; carbamoyl phosphate from L-arginine: step 2/2. Its function is as follows. Reversibly catalyzes the transfer of the carbamoyl group from carbamoyl phosphate (CP) to the N(epsilon) atom of ornithine (ORN) to produce L-citrulline. In Mycoplasma capricolum subsp. capripneumoniae, this protein is Ornithine carbamoyltransferase, catabolic (arcB).